A 361-amino-acid chain; its full sequence is Phosphoserine aminotransferase (361 aa).

An L-glutamate-binding site is contributed by arginine 43. Residues 77–78 (AS), tryptophan 103, threonine 153, aspartate 173, and glutamine 196 each bind pyridoxal 5'-phosphate. Lysine 197 is modified (N6-(pyridoxal phosphate)lysine). 238–239 (NT) serves as a coordination point for pyridoxal 5'-phosphate.

It belongs to the class-V pyridoxal-phosphate-dependent aminotransferase family. SerC subfamily. Homodimer. Pyridoxal 5'-phosphate serves as cofactor.

The protein localises to the cytoplasm. The enzyme catalyses O-phospho-L-serine + 2-oxoglutarate = 3-phosphooxypyruvate + L-glutamate. It carries out the reaction 4-(phosphooxy)-L-threonine + 2-oxoglutarate = (R)-3-hydroxy-2-oxo-4-phosphooxybutanoate + L-glutamate. It participates in amino-acid biosynthesis; L-serine biosynthesis; L-serine from 3-phospho-D-glycerate: step 2/3. It functions in the pathway cofactor biosynthesis; pyridoxine 5'-phosphate biosynthesis; pyridoxine 5'-phosphate from D-erythrose 4-phosphate: step 3/5. Functionally, catalyzes the reversible conversion of 3-phosphohydroxypyruvate to phosphoserine and of 3-hydroxy-2-oxo-4-phosphonooxybutanoate to phosphohydroxythreonine. The polypeptide is Phosphoserine aminotransferase (Stutzerimonas stutzeri (Pseudomonas stutzeri)).